Here is a 425-residue protein sequence, read N- to C-terminus: 26S proteasome regulatory subunit 7 (425 aa).

An ATP-binding site is contributed by 208–215; it reads GPPGTGKT.

The protein belongs to the AAA ATPase family.

The protein localises to the cytoplasm. Its subcellular location is the nucleus. Functionally, the 26S proteasome is involved in the ATP-dependent degradation of ubiquitinated proteins. The regulatory (or ATPase) complex confers ATP dependency and substrate specificity to the 26S complex. The polypeptide is 26S proteasome regulatory subunit 7 (RPT1) (Prunus persica (Peach)).